The chain runs to 162 residues: Peptide deformylase-like (162 aa).

This sequence belongs to the polypeptide deformylase family.

The polypeptide is Peptide deformylase-like (Staphylococcus aureus (strain COL)).